A 518-amino-acid chain; its full sequence is Putative ribose/galactose/methyl galactoside import ATP-binding protein (518 aa).

The tract at residues 1–22 is disordered; sequence MSIAVLDRPMSRQDTPSASSVP. Polar residues predominate over residues 12 to 22; the sequence is RQDTPSASSVP. 2 ABC transporter domains span residues 29–265 and 275–515; these read LEVR…VGRE and VPIG…VMEL. Residue 61–68 coordinates ATP; the sequence is GENGAGKS.

It belongs to the ABC transporter superfamily. Carbohydrate importer 2 (CUT2) (TC 3.A.1.2) family.

It localises to the cell inner membrane. It catalyses the reaction D-ribose(out) + ATP + H2O = D-ribose(in) + ADP + phosphate + H(+). The enzyme catalyses D-galactose(out) + ATP + H2O = D-galactose(in) + ADP + phosphate + H(+). Part of an ABC transporter complex involved in carbohydrate import. Could be involved in ribose, galactose and/or methyl galactoside import. Responsible for energy coupling to the transport system. The protein is Putative ribose/galactose/methyl galactoside import ATP-binding protein of Ralstonia nicotianae (strain ATCC BAA-1114 / GMI1000) (Ralstonia solanacearum).